A 532-amino-acid polypeptide reads, in one-letter code: Muscarinic acetylcholine receptor M5 (532 aa).

At 1–29 (MEGDSYGNATTINGTPVNHQPLERHRLWE) the chain is on the extracellular side. N-linked (GlcNAc...) asparagine glycosylation is present at Asn-8. Residues 30-53 (VITIAAVTAVVSLITIVGNVLVMI) traverse the membrane as a helical segment. Over 54-66 (SFKVNSQLKTVNN) the chain is Cytoplasmic. Residues 67-87 (YYLLSLACADLIIGIFSMNLY) form a helical membrane-spanning segment. Topologically, residues 88–104 (TTYILMGRWALGSLACD) are extracellular. Residues 105 to 126 (LWLALDYVASNASVMNLLVISF) form a helical membrane-spanning segment. Over 127–146 (DRYFSITRPLTYRAKRTPKR) the chain is Cytoplasmic. Residues 147–169 (AGIMIGLAWLISFILWAPAILCW) form a helical membrane-spanning segment. Topologically, residues 170 to 191 (QYLVGKRTVPPDECQIQFLSEP) are extracellular. The helical transmembrane segment at 192–214 (TITFGTAIAAFYIPVSVMTILYC) threads the bilayer. Topologically, residues 215 to 443 (RIYRETEKRT…LVKERKAAQT (229 aa)) are cytoplasmic. The segment at 263–294 (QRERNQASRSSSHRSTSITGKPSQATGPSTNW) is disordered. Residues 270–279 (SRSSSHRSTS) are compositionally biased toward low complexity. Residues 280-294 (ITGKPSQATGPSTNW) show a composition bias toward polar residues. A helical transmembrane segment spans residues 444-464 (LSAILLAFIITWTPYNIMVLV). Over 465-478 (STFCDKCVPVALWH) the chain is Extracellular. Residues 479-498 (LGYWLCYVNSTVNPICYALC) traverse the membrane as a helical segment. Over 499–532 (NRTFRKTFKMLLLCQWKKKKVEEKLYWQGNSKLP) the chain is Cytoplasmic. Residues Thr-501 and Thr-505 each carry the phosphothreonine modification.

Belongs to the G-protein coupled receptor 1 family. Muscarinic acetylcholine receptor subfamily. CHRM5 sub-subfamily.

Its subcellular location is the cell membrane. It localises to the postsynaptic cell membrane. Functionally, the muscarinic acetylcholine receptor mediates various cellular responses, including inhibition of adenylate cyclase, breakdown of phosphoinositides and modulation of potassium channels through the action of G proteins. Primary transducing effect is Pi turnover. This Saimiri boliviensis boliviensis (Bolivian squirrel monkey) protein is Muscarinic acetylcholine receptor M5 (CHRM5).